The chain runs to 210 residues: Resolvase (210 aa).

Residues 6 to 150 (VARVYLRVSS…EDRRERQRQG (145 aa)) form the Resolvase/invertase-type recombinase catalytic domain. Serine 14 (O-(5'-phospho-DNA)-serine intermediate) is an active-site residue. The H-T-H motif DNA-binding region spans 191 to 210 (GVSVSQVKRVWAQNQTKDKV).

The protein belongs to the site-specific recombinase resolvase family.

Site-specific recombination protein. The chain is Resolvase (stbA) from Pseudomonas syringae pv. tomato.